The following is a 905-amino-acid chain: Protein translocase subunit SecA (905 aa).

ATP contacts are provided by residues Gln87, 105-109 (GEGKT), and Asp512. Residues 840-905 (AQRQQEAMAQ…HCHGSKARYA (66 aa)) are disordered. Residues 843–852 (QQEAMAQAES) are compositionally biased toward low complexity. Over residues 853–862 (ENYRTADHQA) the composition is skewed to basic and acidic residues. The span at 863 to 874 (EAQQSESLTEEQ) shows a compositional bias: polar residues. Zn(2+)-binding residues include Cys886, Cys888, Cys897, and His898. Residues 892-905 (KKYKHCHGSKARYA) are compositionally biased toward basic residues.

The protein belongs to the SecA family. As to quaternary structure, monomer and homodimer. Part of the essential Sec protein translocation apparatus which comprises SecA, SecYEG and auxiliary proteins SecDF-YajC and YidC. Zn(2+) serves as cofactor.

The protein resides in the cell inner membrane. It is found in the cytoplasm. It catalyses the reaction ATP + H2O + cellular proteinSide 1 = ADP + phosphate + cellular proteinSide 2.. In terms of biological role, part of the Sec protein translocase complex. Interacts with the SecYEG preprotein conducting channel. Has a central role in coupling the hydrolysis of ATP to the transfer of proteins into and across the cell membrane, serving both as a receptor for the preprotein-SecB complex and as an ATP-driven molecular motor driving the stepwise translocation of polypeptide chains across the membrane. In Actinobacillus pleuropneumoniae serotype 3 (strain JL03), this protein is Protein translocase subunit SecA.